We begin with the raw amino-acid sequence, 194 residues long: MVVSIECIPRTSFGRNSANVLRRSGFVPAVIYGKERENINVAISVRDVSKHFAVLSGSGVVELSCEGKVYKVVPKAYELHPVSSVVLHLDFVFAGEHASKFQVPLNFVNSGKSEAIRLGAMLNIVKRTVLVRCTAANLPKSIPVDIENAKVGDSIKFSDLVFPDGVVPLARDANSVVATVVGKKVKAGTVAATA.

The protein belongs to the bacterial ribosomal protein bL25 family. CTC subfamily. As to quaternary structure, part of the 50S ribosomal subunit; part of the 5S rRNA/L5/L18/L25 subcomplex. Contacts the 5S rRNA. Binds to the 5S rRNA independently of L5 and L18.

Its function is as follows. This is one of the proteins that binds to the 5S RNA in the ribosome where it forms part of the central protuberance. This Neorickettsia sennetsu (strain ATCC VR-367 / Miyayama) (Ehrlichia sennetsu) protein is Large ribosomal subunit protein bL25.